The chain runs to 276 residues: Carboxysome assembly protein CcmO (276 aa).

BMC domains are found at residues 16-100 (ALGV…AVLP) and 120-204 (AIGL…DSLP). 2 disordered regions span residues 200–219 (MDSL…LQLP) and 252–276 (QSAL…RDDQ).

Belongs to the bacterial microcompartments protein family. As to quaternary structure, homooligomerizes, possibly as a trimer, interacts with CcmK2 in the carboxysome.

It localises to the carboxysome. Functionally, required for formation of the carboxysome, a polyhedral inclusion where RuBisCO (ribulose bisphosphate carboxylase, rbcL-rbcS) is sequestered. Required for recruitment of major shell protein CcmK2 to the pre-carboxysome. Suggested to be a carboxysome shell protein, but it is not detected in gels, mass spectrometry or by protein sequencing. In terms of biological role, beta-carboxysome assembly initiates when soluble RuBisCO is condensed into a liquid matrix in a pre-carboxysome by the RbcS-like domains of probably both CcmM58 and CcmM35. CcmN interacts with the N-terminus of CcmM58, and then recruits the CcmK2 major shell protein via CcmN's encapsulation peptide. Shell formation requires CcmK proteins and CcmO. CcmL caps the otherwise elongated carboxysome. Once fully encapsulated carboxysomes are formed, they migrate within the cell probably via interactions with the cytoskeleton. The protein is Carboxysome assembly protein CcmO of Synechococcus elongatus (strain ATCC 33912 / PCC 7942 / FACHB-805) (Anacystis nidulans R2).